Here is a 109-residue protein sequence, read N- to C-terminus: ATPase inhibitor, mitochondrial (109 aa).

Residues 1 to 22 constitute a mitochondrion transit peptide; that stretch reads MAGSSSLLRAGIRNVLLMQMRR. Residues 27-56 are N-terminal inhibitory region; sequence LGELGKGAGKGGGGGGSVREAGGAFGKRQA. The interval 27 to 109 is disordered; that stretch reads LGELGKGAGK…KSKIKKLNDD (83 aa). Residues 30–43 show a composition bias toward gly residues; that stretch reads LGKGAGKGGGGGGS. 2 stretches are compositionally biased toward basic and acidic residues: residues 55–69 and 77–98; these read QAAEEERYFRQKEQE and HHEEEIRHHKGEIERLQKEIER. A coiled-coil region spans residues 71-109; that stretch reads IASLRKHHEEEIRHHKGEIERLQKEIERHKSKIKKLNDD. The interval 78–109 is antiparallel alpha-helical coiled coil region; it reads HEEEIRHHKGEIERLQKEIERHKSKIKKLNDD. The segment covering 99–109 has biased composition (basic residues); that stretch reads HKSKIKKLNDD.

The protein belongs to the ATPase inhibitor family. As to quaternary structure, homodimer; represents the active form and is present at a pH value below 6.5. Homotetramer; represents the inactive form and is present at a pH value above 7.0.

The protein localises to the mitochondrion. Functionally, endogenous F(1)F(o)-ATPase inhibitor limiting ATP depletion when the mitochondrial membrane potential falls below a threshold and the F(1)F(o)-ATP synthase starts hydrolyzing ATP to pump protons out of the mitochondrial matrix. Required to avoid the consumption of cellular ATP when the F(1)F(o)-ATP synthase enzyme acts as an ATP hydrolase. Indirectly acts as a regulator of heme synthesis in erythroid tissues: regulates heme synthesis by modulating the mitochondrial pH and redox potential, allowing fech to efficiently catalyze the incorporation of iron into protoporphyrin IX to produce heme. The protein is ATPase inhibitor, mitochondrial of Xenopus tropicalis (Western clawed frog).